The sequence spans 338 residues: Glycerol-3-phosphate dehydrogenase [NAD(P)+] (338 aa).

The NADPH site is built by Ser15, Tyr16, His36, and Lys110. Sn-glycerol 3-phosphate contacts are provided by Lys110, Gly139, and Thr141. Residue Ala143 participates in NADPH binding. Lys195, Asp248, Ser258, Arg259, and Asn260 together coordinate sn-glycerol 3-phosphate. The Proton acceptor role is filled by Lys195. Arg259 provides a ligand contact to NADPH. Positions 283 and 285 each coordinate NADPH.

The protein belongs to the NAD-dependent glycerol-3-phosphate dehydrogenase family.

The protein resides in the cytoplasm. The catalysed reaction is sn-glycerol 3-phosphate + NAD(+) = dihydroxyacetone phosphate + NADH + H(+). The enzyme catalyses sn-glycerol 3-phosphate + NADP(+) = dihydroxyacetone phosphate + NADPH + H(+). Its pathway is membrane lipid metabolism; glycerophospholipid metabolism. Its function is as follows. Catalyzes the reduction of the glycolytic intermediate dihydroxyacetone phosphate (DHAP) to sn-glycerol 3-phosphate (G3P), the key precursor for phospholipid synthesis. This Edwardsiella ictaluri (strain 93-146) protein is Glycerol-3-phosphate dehydrogenase [NAD(P)+].